The chain runs to 157 residues: Succinate dehydrogenase assembly factor 2-A, mitochondrial (157 aa).

The protein belongs to the SDHAF2 family. As to quaternary structure, interacts with the flavoprotein subunit within the SDH catalytic dimer.

The protein resides in the mitochondrion matrix. Functionally, plays an essential role in the assembly of succinate dehydrogenase (SDH), an enzyme complex (also referred to as respiratory complex II) that is a component of both the tricarboxylic acid (TCA) cycle and the mitochondrial electron transport chain, and which couples the oxidation of succinate to fumarate with the reduction of ubiquinone (coenzyme Q) to ubiquinol. Required for flavinylation (covalent attachment of FAD) of the flavoprotein subunit of the SDH catalytic dimer. The chain is Succinate dehydrogenase assembly factor 2-A, mitochondrial from Drosophila willistoni (Fruit fly).